The primary structure comprises 427 residues: MPIIEQVGAREILDSRGNPTVEVEVALTDGTFARAAVPSGASTGEHEAVELRDGGSRYGGKGVEKAVEAVLDEIAPQVIGLSADDQRLVDQALLDLDGTPDKSRLGANAILGVSLAVSKAAAESAGLPLFRYIGGPNAHILPVPMMNILNGGAHADTGVDVQEFMVAPIGAPSFKEALRWGAEVYHSLKSVLKNQGLATGLGDEGGFAPDVAGTKAALDLISSAIEATGLKLGSDVALALDVAATEFYTEGSGYAFEKETRTAEQMAEFYAGLLDSYPLVSIEDPLSEDDWDGWVSLTAAIGDRIQLVGDDLFVTNPERLEDGIQRGAANALLVKVNQIGTLTETLDAVSLAHNSGYRTMMSHRSGETEDTTIADLAVAVGSGQIKTGAPARSERVAKYNQLLRIEETLGDAARYAGDLAFPRLEAK.

Gln162 lines the (2R)-2-phosphoglycerate pocket. Glu204 (proton donor) is an active-site residue. Positions 241, 283, and 310 each coordinate Mg(2+). (2R)-2-phosphoglycerate contacts are provided by Lys335, Arg364, Ser365, and Lys386. The Proton acceptor role is filled by Lys335.

It belongs to the enolase family. Mg(2+) is required as a cofactor.

The protein localises to the cytoplasm. It localises to the secreted. Its subcellular location is the cell surface. The catalysed reaction is (2R)-2-phosphoglycerate = phosphoenolpyruvate + H2O. The protein operates within carbohydrate degradation; glycolysis; pyruvate from D-glyceraldehyde 3-phosphate: step 4/5. In terms of biological role, catalyzes the reversible conversion of 2-phosphoglycerate (2-PG) into phosphoenolpyruvate (PEP). It is essential for the degradation of carbohydrates via glycolysis. The protein is Enolase of Mycolicibacterium smegmatis (strain ATCC 700084 / mc(2)155) (Mycobacterium smegmatis).